A 444-amino-acid polypeptide reads, in one-letter code: ATP-dependent protease ATPase subunit HslU (444 aa).

Residues Ile-20, 62–67 (GVGKTE), Asp-257, Glu-322, and Arg-394 each bind ATP.

It belongs to the ClpX chaperone family. HslU subfamily. As to quaternary structure, a double ring-shaped homohexamer of HslV is capped on each side by a ring-shaped HslU homohexamer. The assembly of the HslU/HslV complex is dependent on binding of ATP.

Its subcellular location is the cytoplasm. In terms of biological role, ATPase subunit of a proteasome-like degradation complex; this subunit has chaperone activity. The binding of ATP and its subsequent hydrolysis by HslU are essential for unfolding of protein substrates subsequently hydrolyzed by HslV. HslU recognizes the N-terminal part of its protein substrates and unfolds these before they are guided to HslV for hydrolysis. The polypeptide is ATP-dependent protease ATPase subunit HslU (Bordetella avium (strain 197N)).